Here is a 137-residue protein sequence, read N- to C-terminus: Ribosomal RNA small subunit methyltransferase G (137 aa).

S-adenosyl-L-methionine contacts are provided by residues Gly-75, Phe-80, and 126–127 (AE).

This sequence belongs to the methyltransferase superfamily. RNA methyltransferase RsmG family.

It is found in the cytoplasm. In terms of biological role, specifically methylates the N7 position of a guanine in 16S rRNA. This is Ribosomal RNA small subunit methyltransferase G from Mycoplasma mycoides subsp. mycoides SC (strain CCUG 32753 / NCTC 10114 / PG1).